Consider the following 742-residue polypeptide: Phosphoribosylformylglycinamidine synthase subunit PurL (742 aa).

Residue His-54 is part of the active site. ATP is bound by residues Tyr-57 and Lys-96. Glu-98 serves as a coordination point for Mg(2+). Residues 99 to 102 and Arg-121 each bind substrate; that span reads SHNH. His-100 functions as the Proton acceptor in the catalytic mechanism. Asp-122 serves as a coordination point for Mg(2+). A substrate-binding site is contributed by Gln-245. Position 273 (Asp-273) interacts with Mg(2+). 317–319 contributes to the substrate binding site; sequence ESQ. Residues Asp-500 and Gly-537 each coordinate ATP. Mg(2+) is bound at residue Asn-538. Residue Ser-540 coordinates substrate.

The protein belongs to the FGAMS family. As to quaternary structure, monomer. Part of the FGAM synthase complex composed of 1 PurL, 1 PurQ and 2 PurS subunits.

It localises to the cytoplasm. It carries out the reaction N(2)-formyl-N(1)-(5-phospho-beta-D-ribosyl)glycinamide + L-glutamine + ATP + H2O = 2-formamido-N(1)-(5-O-phospho-beta-D-ribosyl)acetamidine + L-glutamate + ADP + phosphate + H(+). It functions in the pathway purine metabolism; IMP biosynthesis via de novo pathway; 5-amino-1-(5-phospho-D-ribosyl)imidazole from N(2)-formyl-N(1)-(5-phospho-D-ribosyl)glycinamide: step 1/2. In terms of biological role, part of the phosphoribosylformylglycinamidine synthase complex involved in the purines biosynthetic pathway. Catalyzes the ATP-dependent conversion of formylglycinamide ribonucleotide (FGAR) and glutamine to yield formylglycinamidine ribonucleotide (FGAM) and glutamate. The FGAM synthase complex is composed of three subunits. PurQ produces an ammonia molecule by converting glutamine to glutamate. PurL transfers the ammonia molecule to FGAR to form FGAM in an ATP-dependent manner. PurS interacts with PurQ and PurL and is thought to assist in the transfer of the ammonia molecule from PurQ to PurL. This Geobacillus sp. (strain WCH70) protein is Phosphoribosylformylglycinamidine synthase subunit PurL.